Reading from the N-terminus, the 407-residue chain is L-cysteine:1D-myo-inositol 2-amino-2-deoxy-alpha-D-glucopyranoside ligase (407 aa).

The disordered stretch occupies residues 1 to 22 (MRSWSAPDIVPLPGTGGPLRVH). Cys43 contributes to the Zn(2+) binding site. L-cysteinyl-5'-AMP-binding positions include 43-46 (CGIT), Thr58, and 81-83 (NTT). The 'HIGH' region signature appears at 45–55 (ITPYDAAHLGH). Positions 183 to 188 (ERGGDP) match the 'ERGGDP' region motif. Trp223 is an L-cysteinyl-5'-AMP binding site. Residue Cys227 participates in Zn(2+) binding. L-cysteinyl-5'-AMP is bound at residue 245–247 (GSD). Residue His252 participates in Zn(2+) binding. Val278 lines the L-cysteinyl-5'-AMP pocket. The 'KMSKS' region signature appears at 284 to 288 (KMSKS).

This sequence belongs to the class-I aminoacyl-tRNA synthetase family. MshC subfamily. As to quaternary structure, monomer. Zn(2+) serves as cofactor.

The enzyme catalyses 1D-myo-inositol 2-amino-2-deoxy-alpha-D-glucopyranoside + L-cysteine + ATP = 1D-myo-inositol 2-(L-cysteinylamino)-2-deoxy-alpha-D-glucopyranoside + AMP + diphosphate + H(+). Functionally, catalyzes the ATP-dependent condensation of GlcN-Ins and L-cysteine to form L-Cys-GlcN-Ins. This Nocardiopsis dassonvillei (strain ATCC 23218 / DSM 43111 / CIP 107115 / JCM 7437 / KCTC 9190 / NBRC 14626 / NCTC 10488 / NRRL B-5397 / IMRU 509) (Actinomadura dassonvillei) protein is L-cysteine:1D-myo-inositol 2-amino-2-deoxy-alpha-D-glucopyranoside ligase.